A 652-amino-acid polypeptide reads, in one-letter code: Putative enzymatic polyprotein (652 aa).

A Peptidase A2 domain is found at 21–99 (YHGLFDTGAN…SPDIIIGATF (79 aa)). The active site involves Asp26. The Reverse transcriptase domain maps to 231–413 (FIEEKTNFED…EKIDFLGVQI (183 aa)). The Mg(2+) site is built by Asp301, Asp364, and Asp365.

It carries out the reaction DNA(n) + a 2'-deoxyribonucleoside 5'-triphosphate = DNA(n+1) + diphosphate. It catalyses the reaction Endonucleolytic cleavage to 5'-phosphomonoester.. Functionally, encodes for at least two polypeptides: protease (PR) and reverse transcriptase (RT). The protease processes the polyprotein in cis. Reverse transcriptase is multifunctional enzyme that converts the viral RNA genome into dsDNA in viral cytoplasmic capsids. This enzyme displays a DNA polymerase activity that can copy either DNA or RNA templates, and a ribonuclease H (RNase H) activity that cleaves the RNA strand of RNA-DNA heteroduplexes in a partially processive 3'- to 5'-endonucleasic mode. Neo-synthesized pregenomic RNA (pgRNA) are encapsidated, and reverse-transcribed inside the nucleocapsid. Partial (+)DNA is synthesized from the (-)DNA template and generates the relaxed circular DNA (RC-DNA) genome. After budding and infection, the RC-DNA migrates in the nucleus, and is converted into a plasmid-like covalently closed circular DNA (cccDNA). In Cassava vein mosaic virus (CsVMV), this protein is Putative enzymatic polyprotein.